Consider the following 466-residue polypeptide: A-type ATP synthase subunit B 2 (466 aa).

This sequence belongs to the ATPase alpha/beta chains family. In terms of assembly, has multiple subunits with at least A(3), B(3), C, D, E, F, H, I and proteolipid K(x).

The protein localises to the cell membrane. In terms of biological role, component of the A-type ATP synthase that produces ATP from ADP in the presence of a proton gradient across the membrane. The B chain is a regulatory subunit. The polypeptide is A-type ATP synthase subunit B 2 (Methanospirillum hungatei JF-1 (strain ATCC 27890 / DSM 864 / NBRC 100397 / JF-1)).